The following is a 358-amino-acid chain: Probable BOI-related E3 ubiquitin-protein ligase 2 (358 aa).

A coiled-coil region spans residues 171–234 (KYEIEEKRKR…NQIWRDLAQT (64 aa)). Positions 214-250 (LEERVKSLSIENQIWRDLAQTNEATANHLRTNLEHVL) are WRD domain. Residues 310 to 345 (CRNCGEEESCVLLLPCRHLCLCGVCGSSVHTCPICT) form an RING-type zinc finger.

Interacts with the DELLA proteins GAI, RGA, RGL1, RGL2 and RGL3.

It catalyses the reaction S-ubiquitinyl-[E2 ubiquitin-conjugating enzyme]-L-cysteine + [acceptor protein]-L-lysine = [E2 ubiquitin-conjugating enzyme]-L-cysteine + N(6)-ubiquitinyl-[acceptor protein]-L-lysine.. It participates in protein degradation; proteasomal ubiquitin-dependent pathway. Probable E3 ubiquitin-protein ligase. Has no effect on the stability of the DELLA proteins. The chain is Probable BOI-related E3 ubiquitin-protein ligase 2 (BRG2) from Arabidopsis thaliana (Mouse-ear cress).